A 393-amino-acid polypeptide reads, in one-letter code: DNA/RNA-binding protein KIN17 (393 aa).

The C2H2-type zinc-finger motif lies at 28-50 (CQMCQKQCRDENGFKCHCMSESH). The interval 51 to 160 (QRQLLLASEN…RQLELEKKKK (110 aa)) is winged helix-turn-helix (wHTH). K135 bears the N6,N6,N6-trimethyllysine; by METTL22; in vitro mark. K135 carries the N6-methyllysine modification. The stretch at 147–180 (ETIRRQLELEKKKKQDLDDEEKTAKFIEEQVRRG) forms a coiled coil. A compositionally biased stretch (low complexity) spans 209 to 224 (KGACSSSGATSSKSST). The disordered stretch occupies residues 209–260 (KGACSSSGATSSKSSTLGPSALKTIGSSASVKRKESSQSSTQSKEKKKKKSA). A coiled-coil region spans residues 250 to 277 (QSKEKKKKKSALDEIMEIEEEKKRTART). The interval 284–334 (EIIVKIITKKLGEKYHKKKAIVKEVIDKYTAVVKMIDSGDKLKLDQTHLET) is C-terminal subdomain A. The tract at residues 340–391 (GKRILVLNGGYRGNEGTLESINEKTFSATIVIETGPLKGRRVEGIQYEDISK) is C-terminal subdomain B.

This sequence belongs to the KIN17 family. As to quaternary structure, associated with DNA polymerase alpha, RFC1 and cyclin A, in multiprotein DNA replication complexes. Also associates with replication origins at the G1/S phase boundary and throughout the S phase in vivo. (Microbial infection) Interacts with SV40 large T antigen. Ubiquitously expressed in all tissues examined, with highest levels in skeletal muscle, heart and testis. Differentially expressed in non-tumorigenic and tumorigenic cell lines. Highly expressed in proliferating epithelial keratinocyte cells in vitro (at protein level).

It is found in the nucleus. The protein localises to the cytoplasm. In terms of biological role, involved in DNA replication and the cellular response to DNA damage. May participate in DNA replication factories and create a bridge between DNA replication and repair mediated by high molecular weight complexes. May play a role in illegitimate recombination and regulation of gene expression. May participate in mRNA processing. Binds, in vitro, to double-stranded DNA. Also shown to bind preferentially to curved DNA in vitro and in vivo. Binds via its C-terminal domain to RNA in vitro. The chain is DNA/RNA-binding protein KIN17 from Homo sapiens (Human).